Consider the following 141-residue polypeptide: Hemoglobin subunit alpha (141 aa).

Positions 1–141 (VLSSTDKSNV…VSTVLTSKYR (141 aa)) constitute a Globin domain. Serine 3 bears the Phosphoserine mark. An N6-succinyllysine mark is found at lysine 7 and lysine 11. An N6-acetyllysine; alternate modification is found at lysine 16. Position 16 is an N6-succinyllysine; alternate (lysine 16). Residue tyrosine 24 is modified to Phosphotyrosine. At serine 35 the chain carries Phosphoserine. Lysine 40 is modified (N6-succinyllysine). Histidine 58 is a binding site for O2. Histidine 87 is a binding site for heme b. Position 102 is a phosphoserine (serine 102). Phosphothreonine is present on threonine 108. Serine 124 and serine 131 each carry phosphoserine. A phosphothreonine mark is found at threonine 134 and threonine 137. A Phosphoserine modification is found at serine 138.

It belongs to the globin family. In terms of assembly, heterotetramer of two alpha chains and two beta chains. As to expression, red blood cells.

Functionally, involved in oxygen transport from the lung to the various peripheral tissues. Its function is as follows. Hemopressin acts as an antagonist peptide of the cannabinoid receptor CNR1. Hemopressin-binding efficiently blocks cannabinoid receptor CNR1 and subsequent signaling. The chain is Hemoglobin subunit alpha (HBA) from Pteropus alecto (Black flying fox).